The primary structure comprises 238 residues: Photosynthetic NDH subunit of lumenal location 1, chloroplastic (238 aa).

This sequence belongs to the PsbP family. Part of the chloroplast NDH complex, composed of a mixture of chloroplast and nucleus encoded subunits. Component of the NDH lumenal subcomplex, at least composed of PnsL1, PnsL2, PnsL3, PnsL4 and PnsL5.

The protein localises to the plastid. The protein resides in the chloroplast thylakoid membrane. In terms of biological role, NDH shuttles electrons from NAD(P)H:plastoquinone, via FMN and iron-sulfur (Fe-S) centers, to quinones in the photosynthetic chain and possibly in a chloroplast respiratory chain. The immediate electron acceptor for the enzyme in this species is believed to be plastoquinone. Couples the redox reaction to proton translocation, and thus conserves the redox energy in a proton gradient. Required for accumulation of the chloroplast NAD(P)H dehydrogenase (NDH) complex. This chain is Photosynthetic NDH subunit of lumenal location 1, chloroplastic, found in Arabidopsis thaliana (Mouse-ear cress).